Reading from the N-terminus, the 250-residue chain is Troponin I 1 (250 aa).

2 disordered regions span residues 1–59 (MSQI…ERKK) and 194–250 (SVFT…ADEE). Basic and acidic residues-rich tracts occupy residues 21–45 (DAQRKAQEREAKKAEVRKRLEEAGQ) and 206–221 (DKPEWSKKKEEKKEES). Residues 229 to 250 (PVEEEETAASEGEEEEEEADEE) show a composition bias toward acidic residues.

It belongs to the troponin I family. As to expression, strongly expressed in body wall muscle during embryogenesis, reduces during the larval stages to adult. In late-stage larvae and adults, expression is evident in the proximal gonad of both hermaphrodites and males.

In terms of biological role, troponin I is the inhibitory subunit of troponin, the thin filament regulatory complex which confers calcium-sensitivity to muscle actomyosin ATPase activity. The chain is Troponin I 1 (tni-1) from Caenorhabditis elegans.